Here is a 913-residue protein sequence, read N- to C-terminus: Collagen alpha-2(I) chain (913 aa).

The disordered stretch occupies residues 1-913; it reads SGGFDFSFLP…FGYEGDFYRA (913 aa). Pro10, Pro13, Pro35, and Pro41 each carry 4-hydroxyproline. Low complexity-rich tracts occupy residues 28–67, 125–154, and 199–220; these read LMGP…ARGP, VGAP…SAGP, and PGAN…AGAP. The span at 254-263 shows a compositional bias: gly residues; sequence GESGGKGEPG. The span at 264–274 shows a compositional bias: low complexity; the sequence is SAGPQGPPGSS. Residues 281 to 303 show a composition bias toward gly residues; sequence GPNGGSTGPTGPPGLRGGPGSRG. Positions 316–332 are enriched in low complexity; it reads PAGARGASGPAGVRGPS. 4-hydroxyproline is present on residues Pro338 and Pro341. Composition is skewed to low complexity over residues 367-386 and 408-421; these read LPGI…RGEA and PDGN…PGLQ. Over residues 422 to 431 the composition is skewed to gly residues; that stretch reads GVQGGKGTTG. Low complexity-rich tracts occupy residues 459 to 476 and 488 to 498; these read PGES…SRGP and EPGVVGAPGTA. The segment covering 499-517 has biased composition (gly residues); sequence GPAGSGGPGERGAAGIPGG. Low complexity-rich tracts occupy residues 527–574 and 581–601; these read RGEV…PRGS and VGPA…QPGA. Residues 602–611 are compositionally biased toward basic and acidic residues; the sequence is KGERGTKGPK. Residues 619 to 629 are compositionally biased toward low complexity; that stretch reads PTGPVGSAGPA. Over residues 639-648 the composition is skewed to gly residues; sequence GSRGDGGPPG. A compositionally biased stretch (low complexity) spans 650–659; that stretch reads TGFPGAAGRT. Residues 696–705 are compositionally biased toward gly residues; sequence GETGAGGPPG. 2 stretches are compositionally biased toward low complexity: residues 713 to 740 and 748 to 758; these read SGEP…LGLP and LPGVAGAVGEP. Gly residues predominate over residues 759-776; it reads GPLGIGPPGARGPSGAGK. Positions 782–797 are enriched in low complexity; sequence EPGPVGSVGPVGALGP. Positions 807 to 818 are enriched in basic and acidic residues; that stretch reads RGDKGEPGEKGP. Residues 883–895 show a composition bias toward pro residues; that stretch reads SGPPGPPGPPGPP.

This sequence belongs to the fibrillar collagen family. In terms of assembly, trimers of one alpha 2(I) and two alpha 1(I) chains. Interacts (via C-terminus) with TMEM131 (via PapD-L domain); the interaction is direct and is involved in assembly and TRAPPIII ER-to-Golgi transport complex-dependent secretion of collagen. Prolines at the third position of the tripeptide repeating unit (G-X-Y) are hydroxylated in some or all of the chains. In terms of tissue distribution, expressed in bones.

It localises to the secreted. The protein localises to the extracellular space. The protein resides in the extracellular matrix. Its function is as follows. Type I collagen is a member of group I collagen (fibrillar forming collagen). This is Collagen alpha-2(I) chain from Parocnus serus (Greater Haitian ground sloth).